Here is a 429-residue protein sequence, read N- to C-terminus: Saccharopine dehydrogenase-like oxidoreductase (429 aa).

A2 bears the N-acetylalanine mark. 3 positions are modified to phosphoserine: S209, S215, and S217.

This sequence belongs to the saccharopine dehydrogenase family.

This is Saccharopine dehydrogenase-like oxidoreductase (Sccpdh) from Rattus norvegicus (Rat).